The chain runs to 160 residues: Nuclear transcription factor Y subunit B-5 (160 aa).

Residues 56 to 62 mediate DNA binding; that stretch reads LPIANVG. Residues 83-94 form a subunit association domain (SAD) region; the sequence is MQECVSEFISFV.

This sequence belongs to the NFYB/HAP3 subunit family. Heterotrimeric transcription factor composed of three components, NF-YA, NF-YB and NF-YC. NF-YB and NF-YC must interact and dimerize for NF-YA association and DNA binding. As to expression, expressed in flowers and siliques.

It is found in the nucleus. In terms of biological role, component of the NF-Y/HAP transcription factor complex. The NF-Y complex stimulates the transcription of various genes by recognizing and binding to a CCAAT motif in promoters. This Arabidopsis thaliana (Mouse-ear cress) protein is Nuclear transcription factor Y subunit B-5 (NFYB5).